The chain runs to 342 residues: MKIAVLLSGGVDSSYSAYSLKEQGHELVGIYLKLHASEKKHDLYIKNAQKACEFLGIPLEVLDFQKDFKSAVYDEFINAYEEGQTPNPCALCNPLMKFGLALDHALKLGCEKIATGHYARVKEIDKISYIQEALDKTKDQSYFLYALEHEVIAKLVFPLGDLLKKDIKPLALNAMPFLGTLETYKESQEICFVEKSYIDTLKKHVEVEKEGVVKNLQGEVIGTHKGYMQYTIGKRKGFSIKGALEPHFVVGIDAKKNELVVGKKEDLATHSLKAKNKSLMKDFKDGEYFIKARYRSVPAKAHVSLKDEVIEVGFKEPFYGVAKGQALVVYKDDILLGGGVIV.

Residues 6–13 (LLSGGVDS) and Leu-32 each bind ATP. Catalysis depends on Cys-92, which acts as the Nucleophile. Cys-92 and Cys-191 are disulfide-bonded. Residue Gly-116 coordinates ATP. An interaction with tRNA region spans residues 138–140 (KDQ). Residue Cys-191 is the Cysteine persulfide intermediate of the active site. Positions 293–294 (RY) are interaction with tRNA.

It belongs to the MnmA/TRMU family.

Its subcellular location is the cytoplasm. It catalyses the reaction S-sulfanyl-L-cysteinyl-[protein] + uridine(34) in tRNA + AH2 + ATP = 2-thiouridine(34) in tRNA + L-cysteinyl-[protein] + A + AMP + diphosphate + H(+). Its function is as follows. Catalyzes the 2-thiolation of uridine at the wobble position (U34) of tRNA, leading to the formation of s(2)U34. This is tRNA-specific 2-thiouridylase MnmA from Helicobacter pylori (strain ATCC 700392 / 26695) (Campylobacter pylori).